Reading from the N-terminus, the 400-residue chain is Plasminogen activator inhibitor 1 (400 aa).

An N-terminal signal peptide occupies residues 1–21 (MQMSTVCLALGLALVFGEASA). Asn-230, Asn-286, and Asn-350 each carry an N-linked (GlcNAc...) asparagine glycan.

The protein belongs to the serpin family. In terms of assembly, forms a heterodimer with TMPRSS7. Interacts with VTN. Binds LRP1B; binding is followed by internalization and degradation. Interacts with PPP1CB. In complex with PLAU/uPA, interacts with PLAUR/uPAR. Interacts with SORL1 and LRP1, either alone or in complex with PLAU; these interactions are abolished in the presence of LRPAP1/RAP. The ternary complex composed of PLAUR-PLAU-PAI1 also interacts with SORL1. Interacts with PLAT/tPA. Also interacts with SORL1, when complexed to PLAT/tPA.

It localises to the secreted. Serine protease inhibitor. Inhibits TMPRSS7. Is a primary inhibitor of tissue-type plasminogen activator (PLAT) and urokinase-type plasminogen activator (PLAU). As PLAT inhibitor, it is required for fibrinolysis down-regulation and is responsible for the controlled degradation of blood clots. As PLAU inhibitor, it is involved in the regulation of cell adhesion and spreading. Acts as a regulator of cell migration, independently of its role as protease inhibitor. It is required for stimulation of keratinocyte migration during cutaneous injury repair. It is involved in cellular and replicative senescence. Plays a role in alveolar type 2 cells senescence in the lung. Is involved in the regulation of cementogenic differentiation of periodontal ligament stem cells, and regulates odontoblast differentiation and dentin formation during odontogenesis. In Neovison vison (American mink), this protein is Plasminogen activator inhibitor 1 (SERPINE1).